A 115-amino-acid chain; its full sequence is Large ribosomal subunit protein bL20 (115 aa).

This sequence belongs to the bacterial ribosomal protein bL20 family.

Binds directly to 23S ribosomal RNA and is necessary for the in vitro assembly process of the 50S ribosomal subunit. It is not involved in the protein synthesizing functions of that subunit. The protein is Large ribosomal subunit protein bL20 of Synechococcus sp. (strain CC9605).